The chain runs to 346 residues: Dihydroorotate dehydrogenase (quinone) (346 aa).

FMN contacts are provided by residues 62 to 66 (AGMDK) and Thr86. Lys66 lines the substrate pocket. Residue 111–115 (NRMGF) participates in substrate binding. 2 residues coordinate FMN: Asn142 and Asn175. Residue Asn175 participates in substrate binding. Ser178 serves as the catalytic Nucleophile. Asn180 serves as a coordination point for substrate. Residues Lys211 and Val239 each coordinate FMN. Substrate is bound at residue 240 to 241 (NT). FMN is bound by residues Gly261, Gly289, and 310–311 (YT).

The protein belongs to the dihydroorotate dehydrogenase family. Type 2 subfamily. Monomer. It depends on FMN as a cofactor.

The protein resides in the cell membrane. The catalysed reaction is (S)-dihydroorotate + a quinone = orotate + a quinol. It participates in pyrimidine metabolism; UMP biosynthesis via de novo pathway; orotate from (S)-dihydroorotate (quinone route): step 1/1. Catalyzes the conversion of dihydroorotate to orotate with quinone as electron acceptor. The protein is Dihydroorotate dehydrogenase (quinone) of Thermus thermophilus (strain ATCC 27634 / DSM 579 / HB8).